The chain runs to 138 residues: Protein E6 (138 aa).

2 zinc fingers span residues 25–61 (CNFC…CAAC) and 98–134 (CLIC…CRHC).

The protein belongs to the papillomaviridae E6 protein family. In terms of assembly, forms homodimers. Interacts with ubiquitin-protein ligase UBE3A/E6-AP; this interaction stimulates UBE3A ubiquitin activity. Interacts with host BAK1.

The protein resides in the host cytoplasm. Its subcellular location is the host nucleus. In terms of biological role, plays a major role in the induction and maintenance of cellular transformation. E6 associates with host UBE3A/E6-AP ubiquitin-protein ligase and modulates its activity. Protects host keratinocytes from apoptosis by mediating the degradation of host BAK1. May also inhibit host immune response. This chain is Protein E6, found in Homo sapiens (Human).